A 327-amino-acid polypeptide reads, in one-letter code: Microtubule-associated protein RP/EB family member 2 (327 aa).

A disordered region spans residues 1 to 21 (MPGPTQTLSPNGENNNDIIQD). Ser-9 is subject to Phosphoserine. The Calponin-homology (CH) domain occupies 57 to 159 (TMSRHDIIAW…FIQWFKKFYD (103 aa)). Position 167 is a phosphotyrosine (Tyr-167). Disordered regions lie at residues 171 to 240 (EARQ…DKDL) and 299 to 327 (ASEE…QEEY). A DCTN1-binding region spans residues 187–327 (QIFNLPKKSH…EQQPPQQEEY (141 aa)). Positions 200–234 (SPTAGAAKSSPAAKPGSTPSRPSSAKRASSSGSAS) are enriched in low complexity. Ser-219 bears the Phosphoserine mark. Residues 236–306 (SDKDLETQVI…LYASEEHEGH (71 aa)) form the EB1 C-terminal domain. An APC-binding region spans residues 259–302 (EGVEKERDFYFGKLREIELLCQEHGQENDDLVQRLMDVLYASEE). Positions 300-317 (SEEHEGHTEEPEAEEQAH) are enriched in basic and acidic residues. Residues 318–327 (EQQPPQQEEY) are compositionally biased toward low complexity.

The protein belongs to the MAPRE family. As to quaternary structure, interacts with DCTN1. Interacts with APC (via C-terminal). Interacts with monomeric and polymerized tubulin. Interacts with SLAIN1. Interacts (via the N-terminal region) with BAG1.

It localises to the cytoplasm. It is found in the cytoskeleton. In terms of biological role, may be involved in microtubule polymerization, and spindle function by stabilizing microtubules and anchoring them at centrosomes. May play a role in cell migration. This Pongo abelii (Sumatran orangutan) protein is Microtubule-associated protein RP/EB family member 2 (MAPRE2).